We begin with the raw amino-acid sequence, 447 residues long: tRNA-2-methylthio-N(6)-dimethylallyladenosine synthase (447 aa).

Positions 3-120 (KKLYIKTNGC…LPALLNERLE (118 aa)) constitute an MTTase N-terminal domain. Residues C12, C49, C83, C157, C161, and C164 each coordinate [4Fe-4S] cluster. A Radical SAM core domain is found at 143–375 (RAEGPTAFVS…QNRLLMNAAR (233 aa)). The region spanning 378–441 (ESMIGSKQKI…PNSLRGRLLE (64 aa)) is the TRAM domain.

The protein belongs to the methylthiotransferase family. MiaB subfamily. As to quaternary structure, monomer. It depends on [4Fe-4S] cluster as a cofactor.

It is found in the cytoplasm. The catalysed reaction is N(6)-dimethylallyladenosine(37) in tRNA + (sulfur carrier)-SH + AH2 + 2 S-adenosyl-L-methionine = 2-methylsulfanyl-N(6)-dimethylallyladenosine(37) in tRNA + (sulfur carrier)-H + 5'-deoxyadenosine + L-methionine + A + S-adenosyl-L-homocysteine + 2 H(+). Functionally, catalyzes the methylthiolation of N6-(dimethylallyl)adenosine (i(6)A), leading to the formation of 2-methylthio-N6-(dimethylallyl)adenosine (ms(2)i(6)A) at position 37 in tRNAs that read codons beginning with uridine. In Legionella pneumophila (strain Paris), this protein is tRNA-2-methylthio-N(6)-dimethylallyladenosine synthase.